The following is a 177-amino-acid chain: ATP-dependent protease subunit HslV (177 aa).

Thr-7 is an active-site residue. Positions 162, 165, and 168 each coordinate Na(+).

It belongs to the peptidase T1B family. HslV subfamily. A double ring-shaped homohexamer of HslV is capped on each side by a ring-shaped HslU homohexamer. The assembly of the HslU/HslV complex is dependent on binding of ATP.

It is found in the cytoplasm. The catalysed reaction is ATP-dependent cleavage of peptide bonds with broad specificity.. Its activity is regulated as follows. Allosterically activated by HslU binding. Functionally, protease subunit of a proteasome-like degradation complex believed to be a general protein degrading machinery. The sequence is that of ATP-dependent protease subunit HslV from Thioalkalivibrio sulfidiphilus (strain HL-EbGR7).